A 140-amino-acid chain; its full sequence is Large ribosomal subunit protein bL17 (140 aa).

Belongs to the bacterial ribosomal protein bL17 family. As to quaternary structure, part of the 50S ribosomal subunit. Contacts protein L32.

The protein is Large ribosomal subunit protein bL17 of Methylobacterium nodulans (strain LMG 21967 / CNCM I-2342 / ORS 2060).